The following is a 213-amino-acid chain: Small ribosomal subunit protein uS3 (213 aa).

The region spanning 38–106 (IRKYVKKTLY…EFSIEVNEIR (69 aa)) is the KH type-2 domain.

The protein belongs to the universal ribosomal protein uS3 family. As to quaternary structure, part of the 30S ribosomal subunit. Forms a tight complex with proteins S10 and S14.

Functionally, binds the lower part of the 30S subunit head. Binds mRNA in the 70S ribosome, positioning it for translation. The protein is Small ribosomal subunit protein uS3 of Oleidesulfovibrio alaskensis (strain ATCC BAA-1058 / DSM 17464 / G20) (Desulfovibrio alaskensis).